We begin with the raw amino-acid sequence, 496 residues long: Pup--protein ligase (496 aa).

Glu-30 is a Mg(2+) binding site. Arg-73 serves as a coordination point for ATP. Tyr-75 contributes to the Mg(2+) binding site. Catalysis depends on Asp-77, which acts as the Proton acceptor. Residue Glu-83 coordinates Mg(2+). Positions 86 and 450 each coordinate ATP.

The protein belongs to the Pup ligase/Pup deamidase family. Pup-conjugating enzyme subfamily.

The enzyme catalyses ATP + [prokaryotic ubiquitin-like protein]-L-glutamate + [protein]-L-lysine = ADP + phosphate + N(6)-([prokaryotic ubiquitin-like protein]-gamma-L-glutamyl)-[protein]-L-lysine.. Its pathway is protein degradation; proteasomal Pup-dependent pathway. It functions in the pathway protein modification; protein pupylation. Its function is as follows. Catalyzes the covalent attachment of the prokaryotic ubiquitin-like protein modifier Pup to the proteasomal substrate proteins, thereby targeting them for proteasomal degradation. This tagging system is termed pupylation. The ligation reaction involves the side-chain carboxylate of the C-terminal glutamate of Pup and the side-chain amino group of a substrate lysine. The polypeptide is Pup--protein ligase (Bifidobacterium animalis subsp. lactis (strain AD011)).